A 346-amino-acid polypeptide reads, in one-letter code: 3-isopropylmalate dehydrogenase (346 aa).

76-87 contacts NAD(+); the sequence is GPKWTDPNNRPE. Positions 94, 104, 132, and 217 each coordinate substrate. Mg(2+) is bound by residues Asp217, Asp241, and Asp245. 275–287 is an NAD(+) binding site; it reads GSAPDIANQDIAN.

It belongs to the isocitrate and isopropylmalate dehydrogenases family. LeuB type 1 subfamily. As to quaternary structure, homodimer. Mg(2+) is required as a cofactor. Mn(2+) serves as cofactor.

Its subcellular location is the cytoplasm. It catalyses the reaction (2R,3S)-3-isopropylmalate + NAD(+) = 4-methyl-2-oxopentanoate + CO2 + NADH. The protein operates within amino-acid biosynthesis; L-leucine biosynthesis; L-leucine from 3-methyl-2-oxobutanoate: step 3/4. Functionally, catalyzes the oxidation of 3-carboxy-2-hydroxy-4-methylpentanoate (3-isopropylmalate) to 3-carboxy-4-methyl-2-oxopentanoate. The product decarboxylates to 4-methyl-2 oxopentanoate. This is 3-isopropylmalate dehydrogenase from Staphylococcus saprophyticus subsp. saprophyticus (strain ATCC 15305 / DSM 20229 / NCIMB 8711 / NCTC 7292 / S-41).